A 212-amino-acid chain; its full sequence is Protein RER1C (212 aa).

Met-1 is subject to N-acetylmethionine. The next 4 helical transmembrane spans lie at 55–75, 82–102, 135–155, and 157–177; these read TVPH…IYIV, GFYI…IAFL, EFKF…MTFF, and VFDV…LFFL.

The protein belongs to the RER1 family.

It localises to the membrane. Its function is as follows. Involved in the retrieval of endoplasmic reticulum membrane proteins from the early Golgi compartment. The sequence is that of Protein RER1C (RER1C) from Arabidopsis thaliana (Mouse-ear cress).